A 229-amino-acid chain; its full sequence is Cytochrome c oxidase subunit 2 (229 aa).

Residues 1 to 26 are Mitochondrial intermembrane-facing; that stretch reads MSTWANLGLQDSASPLMEQLIFFHDH. The helical transmembrane segment at 27–48 threads the bilayer; the sequence is ALLILVMITVLVGYLMFMLFFN. At 49–62 the chain is on the mitochondrial matrix side; sequence SYVNRFLLHGQLIE. Residues 63 to 82 form a helical membrane-spanning segment; that stretch reads MIWTILPAIILLFIAMPSLR. The Mitochondrial intermembrane segment spans residues 83–229; sequence LLYLLDEINE…IKWISSTVNS (147 aa). Cu cation-binding residues include H161, C196, E198, C200, H204, and M207. Position 198 (E198) interacts with Mg(2+).

The protein belongs to the cytochrome c oxidase subunit 2 family. In terms of assembly, component of the cytochrome c oxidase (complex IV, CIV), a multisubunit enzyme composed of a catalytic core of 3 subunits and several supernumerary subunits. The complex exists as a monomer or a dimer and forms supercomplexes (SCs) in the inner mitochondrial membrane with ubiquinol-cytochrome c oxidoreductase (cytochrome b-c1 complex, complex III, CIII). It depends on Cu cation as a cofactor.

It localises to the mitochondrion inner membrane. It carries out the reaction 4 Fe(II)-[cytochrome c] + O2 + 8 H(+)(in) = 4 Fe(III)-[cytochrome c] + 2 H2O + 4 H(+)(out). Its function is as follows. Component of the cytochrome c oxidase, the last enzyme in the mitochondrial electron transport chain which drives oxidative phosphorylation. The respiratory chain contains 3 multisubunit complexes succinate dehydrogenase (complex II, CII), ubiquinol-cytochrome c oxidoreductase (cytochrome b-c1 complex, complex III, CIII) and cytochrome c oxidase (complex IV, CIV), that cooperate to transfer electrons derived from NADH and succinate to molecular oxygen, creating an electrochemical gradient over the inner membrane that drives transmembrane transport and the ATP synthase. Cytochrome c oxidase is the component of the respiratory chain that catalyzes the reduction of oxygen to water. Electrons originating from reduced cytochrome c in the intermembrane space (IMS) are transferred via the dinuclear copper A center (CU(A)) of subunit 2 and heme A of subunit 1 to the active site in subunit 1, a binuclear center (BNC) formed by heme A3 and copper B (CU(B)). The BNC reduces molecular oxygen to 2 water molecules using 4 electrons from cytochrome c in the IMS and 4 protons from the mitochondrial matrix. The protein is Cytochrome c oxidase subunit 2 (mt:CoII) of Drosophila lowei (Fruit fly).